A 346-amino-acid chain; its full sequence is Protein phosphatase 1 regulatory subunit 7 (346 aa).

The span at M1–M13 shows a compositional bias: acidic residues. Residues M1–L46 form a disordered region. Over residues E14–G37 the composition is skewed to basic and acidic residues. 11 LRR repeats span residues E63–K84, K85–V106, T107–R128, D129–S150, H151–T172, Q173–R194, E195–T216, N217–V238, N239–N260, K261–S282, and E283–S304. The LRRCT domain occupies N317–F346.

This sequence belongs to the SDS22 family.

It is found in the nucleus. Its function is as follows. Regulatory subunit of protein phosphatase 1. The sequence is that of Protein phosphatase 1 regulatory subunit 7 (ppp1r7) from Xenopus tropicalis (Western clawed frog).